The primary structure comprises 434 residues: CCA tRNA nucleotidyltransferase 1, mitochondrial (434 aa).

Residues 1–41 constitute a mitochondrion transit peptide; the sequence is MLRCLYHWHRPVLNRRWSRLCLPKQYLFTMKLQSPEFQSLF. ATP contacts are provided by glycine 64 and arginine 67. 2 residues coordinate CTP: glycine 64 and arginine 67. 2 residues coordinate Mg(2+): aspartate 77 and aspartate 79. Residues arginine 151, aspartate 194, arginine 197, arginine 200, and arginine 203 each contribute to the ATP site. Residues arginine 151, aspartate 194, arginine 197, arginine 200, and arginine 203 each coordinate CTP. At serine 400 the chain carries Phosphoserine. Lysine 402 is modified (N6-acetyllysine).

The protein belongs to the tRNA nucleotidyltransferase/poly(A) polymerase family. As to quaternary structure, monomer, and homodimer; disulfide-linked. Mg(2+) is required as a cofactor.

The protein resides in the mitochondrion. Its subcellular location is the cytoplasm. It is found in the nucleus. It catalyses the reaction a tRNA precursor + 2 CTP + ATP = a tRNA with a 3' CCA end + 3 diphosphate. It carries out the reaction a tRNA with a 3' CCA end + 2 CTP + ATP = a tRNA with a 3' CCACCA end + 3 diphosphate. In terms of biological role, nucleotidyltransferase that catalyzes the addition and repair of the essential 3'-terminal CCA sequence in tRNAs, which is necessary for the attachment of amino acids to the 3' terminus of tRNA molecules, using CTP and ATP as substrates. tRNA 3'-terminal CCA addition is required both for tRNA processing and repair. Promotes tRNA repair and recycling downstream of the ribosome-associated quality control (RQC) pathway by mediating addition of the tRNA 3'-terminal CCA following cleavage by ANKZF1 and repair by ELAC1. Also involved in tRNA surveillance by mediating tandem CCA addition to generate a CCACCA at the 3' terminus of unstable tRNAs and tRNA-like transcripts. While stable tRNAs receive only 3'-terminal CCA, unstable tRNAs beginning with GG are marked with CCACCA and rapidly degraded. The structural flexibility of RNA controls the choice between CCA versus CCACCA addition: following the first CCA addition cycle, nucleotide-binding to the active site triggers a clockwise screw motion, producing torque on the RNA. This ejects stable RNAs, whereas unstable RNAs are refolded while bound to the enzyme and subjected to a second CCA catalytic cycle. Functionally, adds 2 C residues (CC-) to the 3' terminus of tRNA molecules instead of a complete CCA end as isoform 1 does (in vitro). The chain is CCA tRNA nucleotidyltransferase 1, mitochondrial from Homo sapiens (Human).